A 79-amino-acid polypeptide reads, in one-letter code: Acyl carrier protein (79 aa).

The 76-residue stretch at 2–77 (SDIEARVRKI…SAIDYANTHQ (76 aa)) folds into the Carrier domain. Position 37 is an O-(pantetheine 4'-phosphoryl)serine (Ser-37).

Belongs to the acyl carrier protein (ACP) family. 4'-phosphopantetheine is transferred from CoA to a specific serine of apo-ACP by AcpS. This modification is essential for activity because fatty acids are bound in thioester linkage to the sulfhydryl of the prosthetic group.

It is found in the cytoplasm. It participates in lipid metabolism; fatty acid biosynthesis. Its function is as follows. Carrier of the growing fatty acid chain in fatty acid biosynthesis. The protein is Acyl carrier protein of Verminephrobacter eiseniae (strain EF01-2).